A 594-amino-acid polypeptide reads, in one-letter code: UvrABC system protein C (594 aa).

The GIY-YIG domain occupies 14–91; sequence DQPGCYLMKD…IKKHDPKYNI (78 aa). A UVR domain is found at 196–231; it reads KEVRSELETKMYEASEKLEFERAKELRDQIAHIDAI.

This sequence belongs to the UvrC family. As to quaternary structure, interacts with UvrB in an incision complex.

It is found in the cytoplasm. Functionally, the UvrABC repair system catalyzes the recognition and processing of DNA lesions. UvrC both incises the 5' and 3' sides of the lesion. The N-terminal half is responsible for the 3' incision and the C-terminal half is responsible for the 5' incision. The protein is UvrABC system protein C of Bacillus anthracis (strain A0248).